Consider the following 365-residue polypeptide: GTPase Obg (365 aa).

Residues 1 to 177 (MFTDYVRILA…GQFLLELKTI (177 aa)) enclose the Obg domain. The disordered stretch occupies residues 64–85 (QFAEDGQPGKGQKRKGRDGKNL). Positions 178–348 (ADVGFVGLPN…FLNSCRKSFE (171 aa)) constitute an OBG-type G domain. Residues 184 to 191 (GLPNSGKS), 209 to 213 (FTTLK), 231 to 234 (DIPG), 300 to 303 (NKVD), and 329 to 331 (SAL) contribute to the GTP site. Mg(2+)-binding residues include Ser191 and Thr211.

This sequence belongs to the TRAFAC class OBG-HflX-like GTPase superfamily. OBG GTPase family. In terms of assembly, monomer. Mg(2+) serves as cofactor.

Its subcellular location is the cytoplasm. In terms of biological role, an essential GTPase which binds GTP, GDP and possibly (p)ppGpp with moderate affinity, with high nucleotide exchange rates and a fairly low GTP hydrolysis rate. Plays a role in control of the cell cycle, stress response, ribosome biogenesis and in those bacteria that undergo differentiation, in morphogenesis control. This Methylacidiphilum infernorum (isolate V4) (Methylokorus infernorum (strain V4)) protein is GTPase Obg.